The sequence spans 230 residues: Pyridoxine/pyridoxamine 5'-phosphate oxidase (230 aa).

Residues 21–24 (RVEY) and lysine 87 each bind substrate. FMN is bound by residues 82–87 (RSVLCK), 97–98 (YT), lysine 104, and glutamine 126. Substrate is bound by residues tyrosine 144, arginine 148, and serine 152. FMN-binding positions include 161–162 (QS) and tryptophan 207. 213–215 (RVH) is a substrate binding site. Arginine 217 serves as a coordination point for FMN.

It belongs to the pyridoxamine 5'-phosphate oxidase family. As to quaternary structure, homodimer. FMN is required as a cofactor.

The enzyme catalyses pyridoxamine 5'-phosphate + O2 + H2O = pyridoxal 5'-phosphate + H2O2 + NH4(+). It catalyses the reaction pyridoxine 5'-phosphate + O2 = pyridoxal 5'-phosphate + H2O2. Its pathway is cofactor metabolism; pyridoxal 5'-phosphate salvage; pyridoxal 5'-phosphate from pyridoxamine 5'-phosphate: step 1/1. It participates in cofactor metabolism; pyridoxal 5'-phosphate salvage; pyridoxal 5'-phosphate from pyridoxine 5'-phosphate: step 1/1. Functionally, catalyzes the oxidation of either pyridoxine 5'-phosphate (PNP) or pyridoxamine 5'-phosphate (PMP) into pyridoxal 5'-phosphate (PLP). The polypeptide is Pyridoxine/pyridoxamine 5'-phosphate oxidase (Mycolicibacterium smegmatis (strain ATCC 700084 / mc(2)155) (Mycobacterium smegmatis)).